The primary structure comprises 416 residues: Gamma-glutamyl phosphate reductase (416 aa).

This sequence belongs to the gamma-glutamyl phosphate reductase family.

It is found in the cytoplasm. The enzyme catalyses L-glutamate 5-semialdehyde + phosphate + NADP(+) = L-glutamyl 5-phosphate + NADPH + H(+). It participates in amino-acid biosynthesis; L-proline biosynthesis; L-glutamate 5-semialdehyde from L-glutamate: step 2/2. In terms of biological role, catalyzes the NADPH-dependent reduction of L-glutamate 5-phosphate into L-glutamate 5-semialdehyde and phosphate. The product spontaneously undergoes cyclization to form 1-pyrroline-5-carboxylate. The protein is Gamma-glutamyl phosphate reductase of Leptospira interrogans serogroup Icterohaemorrhagiae serovar Lai (strain 56601).